Consider the following 299-residue polypeptide: Endonuclease 4 (299 aa).

The first 24 residues, 1 to 24 (MSSSLRQWFARVLVLTQLINGALC), serve as a signal peptide directing secretion. Positions 25 and 30 each coordinate a divalent metal cation. Residue 25–30 (WGKEGH) participates in substrate binding. Cysteines 34 and 65 form a disulfide. Residues Asp69 and His84 each coordinate a divalent metal cation. Residues 69 to 75 (DEIKHHW), 84 to 87 (HYVD), and 94 to 99 (NYEYCR) each bind substrate. 3 cysteine pairs are disulfide-bonded: Cys93–Cys246, Cys101–Cys111, and Cys226–Cys233. 2 residues coordinate substrate: Asn118 and Tyr136. The N-linked (GlcNAc...) asparagine glycan is linked to Asn118. Asn137 is a glycosylation site (N-linked (GlcNAc...) asparagine). The a divalent metal cation site is built by His147, Asp151, His157, His181, and Asp185. A substrate binding region spans residues 147-196 (HFIGDIHQPLHVGFLGDEGGNTITVRWYRRKTNLHHVWDNMIIESALKTY). N-linked (GlcNAc...) asparagine glycosylation is found at Asn198, Asn211, and Asn229. Residues 284–299 (ATLNRIFSSKPKHAGS) constitute a propeptide, removed in mature form.

The protein belongs to the nuclease type I family. In terms of assembly, monomer. Mn(2+) is required as a cofactor. The cofactor is Ca(2+).

The catalysed reaction is Endonucleolytic cleavage to 5'-phosphomononucleotide and 5'-phosphooligonucleotide end-products.. Functionally, endonuclease that can use single-stranded RNA and DNA as substrates. In contradiction with PubMed:23620482, cannot hydrolyze single-stranded DNA and does not cleave mismatches. The sequence is that of Endonuclease 4 from Arabidopsis thaliana (Mouse-ear cress).